Consider the following 420-residue polypeptide: Serine hydroxymethyltransferase (420 aa).

(6S)-5,6,7,8-tetrahydrofolate contacts are provided by residues L123 and 127–129 (GHL). Residue K232 is modified to N6-(pyridoxal phosphate)lysine.

The protein belongs to the SHMT family. Homodimer. The cofactor is pyridoxal 5'-phosphate.

The protein localises to the cytoplasm. The enzyme catalyses (6R)-5,10-methylene-5,6,7,8-tetrahydrofolate + glycine + H2O = (6S)-5,6,7,8-tetrahydrofolate + L-serine. The protein operates within one-carbon metabolism; tetrahydrofolate interconversion. It functions in the pathway amino-acid biosynthesis; glycine biosynthesis; glycine from L-serine: step 1/1. In terms of biological role, catalyzes the reversible interconversion of serine and glycine with tetrahydrofolate (THF) serving as the one-carbon carrier. This reaction serves as the major source of one-carbon groups required for the biosynthesis of purines, thymidylate, methionine, and other important biomolecules. Also exhibits THF-independent aldolase activity toward beta-hydroxyamino acids, producing glycine and aldehydes, via a retro-aldol mechanism. This is Serine hydroxymethyltransferase from Ehrlichia chaffeensis (strain ATCC CRL-10679 / Arkansas).